The following is a 182-amino-acid chain: Ribosome maturation factor RimM (182 aa).

One can recognise a PRC barrel domain in the interval 103-182 (EDDYYWKDLM…RVEVDWDPGF (80 aa)).

This sequence belongs to the RimM family. Binds ribosomal protein uS19.

The protein localises to the cytoplasm. Functionally, an accessory protein needed during the final step in the assembly of 30S ribosomal subunit, possibly for assembly of the head region. Essential for efficient processing of 16S rRNA. May be needed both before and after RbfA during the maturation of 16S rRNA. It has affinity for free ribosomal 30S subunits but not for 70S ribosomes. This Yersinia pestis bv. Antiqua (strain Antiqua) protein is Ribosome maturation factor RimM.